The sequence spans 142 residues: Large ribosomal subunit protein uL11 (142 aa).

This sequence belongs to the universal ribosomal protein uL11 family. In terms of assembly, part of the ribosomal stalk of the 50S ribosomal subunit. Interacts with L10 and the large rRNA to form the base of the stalk. L10 forms an elongated spine to which L12 dimers bind in a sequential fashion forming a multimeric L10(L12)X complex. One or more lysine residues are methylated.

Its function is as follows. Forms part of the ribosomal stalk which helps the ribosome interact with GTP-bound translation factors. The polypeptide is Large ribosomal subunit protein uL11 (Ruthia magnifica subsp. Calyptogena magnifica).